A 170-amino-acid chain; its full sequence is Peptide deformylase 2 (170 aa).

Residues C94 and H136 each coordinate Fe cation. Residue E137 is part of the active site. H140 contributes to the Fe cation binding site.

The protein belongs to the polypeptide deformylase family. Requires Fe(2+) as cofactor.

It catalyses the reaction N-terminal N-formyl-L-methionyl-[peptide] + H2O = N-terminal L-methionyl-[peptide] + formate. In terms of biological role, removes the formyl group from the N-terminal Met of newly synthesized proteins. Requires at least a dipeptide for an efficient rate of reaction. N-terminal L-methionine is a prerequisite for activity but the enzyme has broad specificity at other positions. The chain is Peptide deformylase 2 from Xanthomonas axonopodis pv. citri (strain 306).